A 1096-amino-acid polypeptide reads, in one-letter code: DNA-directed RNA polymerase subunit beta (1096 aa).

Positions 1069 to 1096 are disordered; sequence DLMQDVNPRRSTPSRPTYESLGSDYQED.

The protein belongs to the RNA polymerase beta chain family. In cyanobacteria the RNAP catalytic core is composed of 2 alpha, 1 beta, 1 beta', 1 gamma and 1 omega subunit. When a sigma factor is associated with the core the holoenzyme is formed, which can initiate transcription.

It catalyses the reaction RNA(n) + a ribonucleoside 5'-triphosphate = RNA(n+1) + diphosphate. DNA-dependent RNA polymerase catalyzes the transcription of DNA into RNA using the four ribonucleoside triphosphates as substrates. The protein is DNA-directed RNA polymerase subunit beta of Prochlorococcus marinus (strain SARG / CCMP1375 / SS120).